A 619-amino-acid chain; its full sequence is Chaperone protein HscA homolog (619 aa).

It belongs to the heat shock protein 70 family.

Functionally, chaperone involved in the maturation of iron-sulfur cluster-containing proteins. Has a low intrinsic ATPase activity which is markedly stimulated by HscB. This Pseudomonas aeruginosa (strain LESB58) protein is Chaperone protein HscA homolog.